Consider the following 255-residue polypeptide: Acetylglutamate kinase (255 aa).

Residues 40–41, Arg62, and Asn153 each bind substrate; that span reads GG.

It belongs to the acetylglutamate kinase family. ArgB subfamily.

Its subcellular location is the cytoplasm. The enzyme catalyses N-acetyl-L-glutamate + ATP = N-acetyl-L-glutamyl 5-phosphate + ADP. The protein operates within amino-acid biosynthesis; L-arginine biosynthesis; N(2)-acetyl-L-ornithine from L-glutamate: step 2/4. Functionally, catalyzes the ATP-dependent phosphorylation of N-acetyl-L-glutamate. The protein is Acetylglutamate kinase of Bacillus cereus (strain ZK / E33L).